The sequence spans 234 residues: Synaptogyrin-1 (234 aa).

At methionine 1 the chain carries N-acetylmethionine. Residues 1 to 23 lie on the Cytoplasmic side of the membrane; the sequence is MEGGAYGAGKAGGAFDPYTLVRQ. The 154-residue stretch at 20–173 folds into the MARVEL domain; that stretch reads LVRQPHTILR…QAVLAFQRYQ (154 aa). Residues 24 to 44 form a helical membrane-spanning segment; sequence PHTILRVVSWVFSIVVFGSIV. Residues 45-71 lie on the Lumenal side of the membrane; that stretch reads NEGYLNNPEEEEEFCIYNRNPNACSYG. A helical membrane pass occupies residues 72-92; that stretch reads VTVGVLAFLTCLVYLALDVYF. Topologically, residues 93–104 are cytoplasmic; the sequence is PQISSVKDRKKA. The chain crosses the membrane as a helical span at residues 105-125; it reads VLSDIGVSAFWAFFWFVGFCF. Topologically, residues 126 to 148 are lumenal; it reads LANQWQVSKPKDNPLNEGTDAAR. Residues 149 to 169 form a helical membrane-spanning segment; sequence AAIAFSFFSIFTWAGQAVLAF. At 170-234 the chain is on the cytoplasmic side; it reads QRYQIGADSA…EPQGYQSQGY (65 aa). A disordered region spans residues 201 to 234; the sequence is EPSAGSDPTGMGGTYQHPANAFDAEPQGYQSQGY.

This sequence belongs to the synaptogyrin family. As to expression, nervous system (at protein level).

Its subcellular location is the cytoplasmic vesicle. The protein resides in the secretory vesicle. The protein localises to the synaptic vesicle membrane. It is found in the melanosome. In terms of biological role, may play a role in regulated exocytosis. Modulates the localization of synaptophysin/SYP into synaptic-like microvesicles and may therefore play a role in synaptic-like microvesicle formation and/or maturation. Involved in the regulation of short-term and long-term synaptic plasticity. This chain is Synaptogyrin-1, found in Rattus norvegicus (Rat).